The sequence spans 876 residues: Alanine--tRNA ligase (876 aa).

The residue at position 74 (Lys-74) is an N6-acetyllysine. The Zn(2+) site is built by His-564, His-568, Cys-666, and His-670.

Belongs to the class-II aminoacyl-tRNA synthetase family. As to quaternary structure, homotetramer. Zn(2+) is required as a cofactor.

It localises to the cytoplasm. The enzyme catalyses tRNA(Ala) + L-alanine + ATP = L-alanyl-tRNA(Ala) + AMP + diphosphate. In terms of biological role, catalyzes the attachment of alanine to tRNA(Ala) in a two-step reaction: alanine is first activated by ATP to form Ala-AMP and then transferred to the acceptor end of tRNA(Ala). Also edits incorrectly charged Ser-tRNA(Ala) and Gly-tRNA(Ala) via its editing domain. In Shigella dysenteriae serotype 1 (strain Sd197), this protein is Alanine--tRNA ligase.